The chain runs to 283 residues: GDP-polyphosphate phosphotransferase (283 aa).

Belongs to the polyphosphate kinase 2 (PPK2) family. Class I subfamily.

It catalyses the reaction [phosphate](n) + GTP = [phosphate](n+1) + GDP. Functionally, uses inorganic polyphosphate (polyP) as a donor to convert GDP to GTP. In Mycolicibacterium smegmatis (strain ATCC 700084 / mc(2)155) (Mycobacterium smegmatis), this protein is GDP-polyphosphate phosphotransferase.